Reading from the N-terminus, the 185-residue chain is Anaphase-promoting complex subunit 10 (185 aa).

N-acetylthreonine is present on threonine 2. The DOC domain maps to 2–185 (TTPNKTPPGA…IDFMMYRSIR (184 aa)). Residue lysine 169 is modified to N6-acetyllysine.

Belongs to the APC10 family. In terms of assembly, the mammalian APC/C is composed at least of 14 distinct subunits ANAPC1, ANAPC2, CDC27/APC3, ANAPC4, ANAPC5, CDC16/APC6, ANAPC7, CDC23/APC8, ANAPC10, ANAPC11, CDC26/APC12, ANAPC13, ANAPC15 and ANAPC16 that assemble into a complex of at least 19 chains with a combined molecular mass of around 1.2 MDa; APC/C interacts with FZR1 and FBXO5. The C-terminus of APC10 binds to CDC27/APC3. Interacts with PIWIL1; interaction only takes place when PIWIL1 binds piRNA. Interacts with FBXO43; the interaction is direct.

It participates in protein modification; protein ubiquitination. Its function is as follows. Component of the anaphase promoting complex/cyclosome (APC/C), a cell cycle-regulated E3 ubiquitin ligase that controls progression through mitosis and the G1 phase of the cell cycle. The APC/C complex acts by mediating ubiquitination and subsequent degradation of target proteins: it mainly mediates the formation of 'Lys-11'-linked polyubiquitin chains and, to a lower extent, the formation of 'Lys-48'- and 'Lys-63'-linked polyubiquitin chains. The APC/C complex catalyzes assembly of branched 'Lys-11'-/'Lys-48'-linked branched ubiquitin chains on target proteins. The polypeptide is Anaphase-promoting complex subunit 10 (ANAPC10) (Homo sapiens (Human)).